The following is a 196-amino-acid chain: Cupin-domain-containing oxidoreductase srdD (196 aa).

Residues 99 to 165 (DFGPGVESPL…GNGTLPGRVM (67 aa)) form a cupin-like domain region.

It belongs to the virC family.

Highly reducing polyketide synthase; part of the gene cluster that mediates the biosynthesis of sordarial, a salicylic aldehyde structurally related to the phytotoxin pyriculol. The most interesting aspect of this pathway is formation of an aromatic product from the highly reducing polyketide synthase srdA. SrdA synthesizes a reduced polyketide chain from one molecule of acetyl-CoA and five molecules of malonyl-CoA. The polyketide chain is then reductively released as an aldehyde. The oxidoreductases srdC, srdD and srdE then oxidize one of the hydroxy groups to facilitate the intramolecular aldol condensation, followed by dehydration to yield a salicylic aldehyde. This aldehyde can undergo facile reduction by endogenous reductases to yield the alcohol 1-hydroxy-2-hydroxymethyl-3-pent-1,3-dienylbenzene. The flavin-dependent srdI counteract against the propensity of the aldehydes to be reduced under physiological conditions and is responsible for reoxidizing 1-hydroxy-2-hydroxymethyl-3-pent-1,3-dienylbenzene back to the salicylic aldehyde. This salicylic aldehyde is then selectively epoxidized by the cupin-domain-containing oxidoreductase srdB to yield the epoxide, which can be hydrolyzed stereoselectively by the hydrolase srdG to give the final product sordarial. The protein is Cupin-domain-containing oxidoreductase srdD of Neurospora crassa (strain ATCC 24698 / 74-OR23-1A / CBS 708.71 / DSM 1257 / FGSC 987).